We begin with the raw amino-acid sequence, 310 residues long: tRNA pseudouridine synthase B (310 aa).

The active-site Nucleophile is Asp49.

The protein belongs to the pseudouridine synthase TruB family. Type 1 subfamily.

It carries out the reaction uridine(55) in tRNA = pseudouridine(55) in tRNA. In terms of biological role, responsible for synthesis of pseudouridine from uracil-55 in the psi GC loop of transfer RNAs. The chain is tRNA pseudouridine synthase B from Rhizobium johnstonii (strain DSM 114642 / LMG 32736 / 3841) (Rhizobium leguminosarum bv. viciae).